The primary structure comprises 248 residues: Ras-like protein family member 11B (248 aa).

The segment at 29-246 (AGRRLVKIAV…ALSAKVRTVT (218 aa)) is small GTPase-like. GTP contacts are provided by residues 40 to 47 (GASGVGKT), 87 to 94 (DTPGIQVH), and 152 to 155 (NKAD). The segment at 205-226 (QQPSSTPEKRRTSLIPRPKSPN) is disordered.

It belongs to the small GTPase superfamily. Ras family. As to expression, widely expressed with highest levels in placenta and primary macrophages.

The enzyme catalyses GTP + H2O = GDP + phosphate + H(+). This chain is Ras-like protein family member 11B, found in Homo sapiens (Human).